Consider the following 641-residue polypeptide: Calpain-6 (641 aa).

The Calpain catalytic domain maps to 26–343 (LFCDPTFLPE…FHKLNVCRNV (318 aa)). The domain III stretch occupies residues 344-495 (NNPVFGRKEL…IFSEVPVQLR (152 aa)). Residues 498-621 (TLDMPKMSCW…YLRKKGGPTA (124 aa)) enclose the C2 domain.

This sequence belongs to the peptidase C2 family. Interacts (via domain III) with microtubules. Interacts (via domain II) with ARHGEF2 (via the N-terminal zinc finger).

The protein localises to the cytoplasm. The protein resides in the perinuclear region. It is found in the cytoskeleton. Its subcellular location is the spindle. Functionally, microtubule-stabilizing protein that may be involved in the regulation of microtubule dynamics and cytoskeletal organization. May act as a regulator of RAC1 activity through interaction with ARHGEF2 to control lamellipodial formation and cell mobility. Does not seem to have protease activity as it has lost the active site residues. The sequence is that of Calpain-6 (Capn6) from Rattus norvegicus (Rat).